The following is a 94-amino-acid chain: Integration host factor subunit beta (94 aa).

The protein belongs to the bacterial histone-like protein family. Heterodimer of an alpha and a beta chain.

This protein is one of the two subunits of integration host factor, a specific DNA-binding protein that functions in genetic recombination as well as in transcriptional and translational control. The protein is Integration host factor subunit beta of Yersinia enterocolitica serotype O:8 / biotype 1B (strain NCTC 13174 / 8081).